Here is a 414-residue protein sequence, read N- to C-terminus: Dothistromin biosynthesis peroxidase dotB (414 aa).

The N-terminal stretch at 1–18 is a signal peptide; that stretch reads MHFFSAIVLTCLASTAVA. C72 provides a ligand contact to heme. 3 N-linked (GlcNAc...) asparagine glycosylation sites follow: N187, N241, and N328.

This sequence belongs to the chloroperoxidase family. Requires heme b as cofactor.

It functions in the pathway mycotoxin biosynthesis. Its function is as follows. Peroxidase; part of the fragmented gene cluster that mediates the biosynthesis of dothistromin (DOTH), a polyketide toxin very similar in structure to the aflatoxin precursor, versicolorin B. The first step of the pathway is the conversion of acetate to norsolorinic acid (NOR) and requires the fatty acid synthase subunits hexA and hexB, as well as the polyketide synthase pksA. PksA combines a hexanoyl starter unit and 7 malonyl-CoA extender units to synthesize the precursor NOR. The hexanoyl starter unit is provided to the acyl-carrier protein (ACP) domain by the fungal fatty acid synthase hexA/hexB. The second step is the conversion of NOR to averantin (AVN) and requires the norsolorinic acid ketoreductase nor1, which catalyzes the dehydration of norsolorinic acid to form (1'S)-averantin. The cytochrome P450 monooxygenase avnA then catalyzes the hydroxylation of AVN to 5'hydroxyaverantin (HAVN). The next step is performed by adhA that transforms HAVN to averufin (AVF). Averufin might then be converted to hydroxyversicolorone by cypX and avfA. Hydroxyversicolorone is further converted versiconal hemiacetal acetate (VHA) by moxY. VHA is then the substrate for the versiconal hemiacetal acetate esterase est1 to yield versiconal (VAL). Versicolorin B synthase vbsA then converts VAL to versicolorin B (VERB) by closing the bisfuran ring. Then, the activity of the versicolorin B desaturase verB leads to versicolorin A (VERA). DotB, a predicted chloroperoxidase, may perform epoxidation of the A-ring of VERA. Alternatively, a cytochrome P450, such as cypX or avnA could catalyze this step. It is also possible that another, uncharacterized, cytochrome P450 enzyme is responsible for this step. Opening of the epoxide could potentially be achieved by the epoxide hydrolase epoA. However, epoA seems not to be required for DOTH biosynthesis, but other epoxide hydrolases may have the ability to complement this hydrolysis. Alternatively, opening of the epoxide ring could be achieved non-enzymatically. The next step is the deoxygenation of ring A to yield the 5,8-dihydroxyanthraquinone which is most likely catalyzed by the NADPH dehydrogenase encoded by ver1. The last stages of DOTH biosynthesis are proposed to involve hydroxylation of the bisfuran. OrdB and norB might have oxidative roles here. An alternative possibility is that cytochrome P450 monoogenases such as avnA and cypX might perform these steps in addition to previously proposed steps. In Dothistroma septosporum (Red band needle blight fungus), this protein is Dothistromin biosynthesis peroxidase dotB.